Reading from the N-terminus, the 194-residue chain is Glycerol-3-phosphate acyltransferase (194 aa).

Helical transmembrane passes span 3-23 (IALL…LIVG), 47-67 (VLGK…GVLP), 78-97 (IHGI…PIYL), 112-132 (ILGV…TLLF), and 153-173 (LFFD…LIII).

Belongs to the PlsY family. In terms of assembly, probably interacts with PlsX.

The protein resides in the cell membrane. The catalysed reaction is an acyl phosphate + sn-glycerol 3-phosphate = a 1-acyl-sn-glycero-3-phosphate + phosphate. The protein operates within lipid metabolism; phospholipid metabolism. In terms of biological role, catalyzes the transfer of an acyl group from acyl-phosphate (acyl-PO(4)) to glycerol-3-phosphate (G3P) to form lysophosphatidic acid (LPA). This enzyme utilizes acyl-phosphate as fatty acyl donor, but not acyl-CoA or acyl-ACP. The sequence is that of Glycerol-3-phosphate acyltransferase from Macrococcus caseolyticus (strain JCSC5402) (Macrococcoides caseolyticum).